The primary structure comprises 176 residues: Inner membrane-spanning protein YciB (176 aa).

The next 5 membrane-spanning stretches (helical) occupy residues 24–44 (TATA…AFRH), 49–69 (PMLW…LVLH), 76–96 (WKPT…ALGF), 121–141 (YVWA…AYNF), and 149–169 (FKLF…SLWL).

Belongs to the YciB family.

The protein resides in the cell inner membrane. Plays a role in cell envelope biogenesis, maintenance of cell envelope integrity and membrane homeostasis. This Paraburkholderia phymatum (strain DSM 17167 / CIP 108236 / LMG 21445 / STM815) (Burkholderia phymatum) protein is Inner membrane-spanning protein YciB.